Reading from the N-terminus, the 238-residue chain is Probable transcriptional regulatory protein TC_0742 (238 aa).

The segment at 1 to 21 is disordered; sequence MAGHSKWANTKHRKERADHKK. The span at 9-21 shows a compositional bias: basic residues; the sequence is NTKHRKERADHKK.

The protein belongs to the TACO1 family.

Its subcellular location is the cytoplasm. The sequence is that of Probable transcriptional regulatory protein TC_0742 from Chlamydia muridarum (strain MoPn / Nigg).